Reading from the N-terminus, the 144-residue chain is uncharacterized protein (144 aa).

The tract at residues Pro98 to Leu127 is disordered.

This is an uncharacterized protein from Aedes vexans (Inland floodwater mosquito).